The following is a 299-amino-acid chain: Acetylglutamate kinase (299 aa).

Substrate is bound by residues 62–63, Arg84, and Asn188; that span reads GG.

This sequence belongs to the acetylglutamate kinase family. ArgB subfamily.

It is found in the cytoplasm. The catalysed reaction is N-acetyl-L-glutamate + ATP = N-acetyl-L-glutamyl 5-phosphate + ADP. It participates in amino-acid biosynthesis; L-arginine biosynthesis; N(2)-acetyl-L-ornithine from L-glutamate: step 2/4. Catalyzes the ATP-dependent phosphorylation of N-acetyl-L-glutamate. The chain is Acetylglutamate kinase from Methanosarcina acetivorans (strain ATCC 35395 / DSM 2834 / JCM 12185 / C2A).